A 315-amino-acid polypeptide reads, in one-letter code: MNPIQHILDTYPLIVLDGAMATELERKGCNLNDSLWSAKILMEEPELIKQVHTDYFAAGADCAITASYQSTFEGFAARGLSEAEARRLIELSVSIAAEARDEFWSLEENRLNRPKPIIAASIGPYGAYLADGSEYRGNYAISEDELIEFHRPRMKALIEAGADVLACETIPCLTEAKAIVRLLKEFPETYAWISFSAKDGLHISDGTPAADCASWLDEHRQIAALGINCTPLQHIPSLIEELKKNTSKPIIVYPNSGEQYDPETKTWNGAACAESYGASARTWHEKGARLIGGCCRTKPENIQEIAAWARSLKTT.

A Hcy-binding domain is found at 2–309; sequence NPIQHILDTY…ENIQEIAAWA (308 aa). Zn(2+)-binding residues include Cys229, Cys294, and Cys295.

It depends on Zn(2+) as a cofactor.

The catalysed reaction is S-methyl-L-methionine + L-homocysteine = 2 L-methionine + H(+). In Bacillus subtilis (strain 168), this protein is Homocysteine S-methyltransferase YbgG (ybgG).